Here is a 177-residue protein sequence, read N- to C-terminus: Large ribosomal subunit protein uL6 (177 aa).

This sequence belongs to the universal ribosomal protein uL6 family. As to quaternary structure, part of the 50S ribosomal subunit.

Its function is as follows. This protein binds to the 23S rRNA, and is important in its secondary structure. It is located near the subunit interface in the base of the L7/L12 stalk, and near the tRNA binding site of the peptidyltransferase center. The sequence is that of Large ribosomal subunit protein uL6 from Serratia proteamaculans (strain 568).